Reading from the N-terminus, the 393-residue chain is S-adenosylmethionine synthase 2 (393 aa).

Glu9 is a binding site for Mg(2+). His15 provides a ligand contact to ATP. Glu43 contributes to the K(+) binding site. L-methionine contacts are provided by Glu56 and Gln99. Residues 167–169, 235–238, Asp246, 252–253, Ala269, Lys273, and Lys277 each bind ATP; these read DGK, SGRF, and RK. L-methionine is bound at residue Asp246. Lys277 contacts L-methionine.

This sequence belongs to the AdoMet synthase family. In terms of assembly, homotetramer. The cofactor is Mn(2+). Mg(2+) serves as cofactor. Co(2+) is required as a cofactor. Requires K(+) as cofactor.

It is found in the cytoplasm. The catalysed reaction is L-methionine + ATP + H2O = S-adenosyl-L-methionine + phosphate + diphosphate. Its pathway is amino-acid biosynthesis; S-adenosyl-L-methionine biosynthesis; S-adenosyl-L-methionine from L-methionine: step 1/1. Its function is as follows. Catalyzes the formation of S-adenosylmethionine from methionine and ATP. The reaction comprises two steps that are both catalyzed by the same enzyme: formation of S-adenosylmethionine (AdoMet) and triphosphate, and subsequent hydrolysis of the triphosphate. In Populus trichocarpa (Western balsam poplar), this protein is S-adenosylmethionine synthase 2 (METK2).